Here is a 157-residue protein sequence, read N- to C-terminus: 2-C-methyl-D-erythritol 2,4-cyclodiphosphate synthase (157 aa).

Positions 8 and 10 each coordinate a divalent metal cation. 4-CDP-2-C-methyl-D-erythritol 2-phosphate contacts are provided by residues 8–10 (DVH) and 34–35 (HS). His42 contacts a divalent metal cation. 4-CDP-2-C-methyl-D-erythritol 2-phosphate contacts are provided by residues 56–58 (DIG), 61–65 (FPDTD), 132–135 (TTTE), Phe139, and Arg142.

Belongs to the IspF family. In terms of assembly, homotrimer. It depends on a divalent metal cation as a cofactor.

The catalysed reaction is 4-CDP-2-C-methyl-D-erythritol 2-phosphate = 2-C-methyl-D-erythritol 2,4-cyclic diphosphate + CMP. Its pathway is isoprenoid biosynthesis; isopentenyl diphosphate biosynthesis via DXP pathway; isopentenyl diphosphate from 1-deoxy-D-xylulose 5-phosphate: step 4/6. Functionally, involved in the biosynthesis of isopentenyl diphosphate (IPP) and dimethylallyl diphosphate (DMAPP), two major building blocks of isoprenoid compounds. Catalyzes the conversion of 4-diphosphocytidyl-2-C-methyl-D-erythritol 2-phosphate (CDP-ME2P) to 2-C-methyl-D-erythritol 2,4-cyclodiphosphate (ME-CPP) with a corresponding release of cytidine 5-monophosphate (CMP). The protein is 2-C-methyl-D-erythritol 2,4-cyclodiphosphate synthase of Pseudomonas putida (strain W619).